The following is a 552-amino-acid chain: Glutamine--tRNA ligase (552 aa).

The 'HIGH' region signature appears at P34 to H44. ATP-binding positions include E35 to N37 and H41 to S47. L-glutamine is bound by residues D67 and Y212. ATP is bound by residues T231, R261–L262, and M269–K271. Residues I268–R272 carry the 'KMSKS' region motif.

Belongs to the class-I aminoacyl-tRNA synthetase family. As to quaternary structure, monomer.

Its subcellular location is the cytoplasm. The enzyme catalyses tRNA(Gln) + L-glutamine + ATP = L-glutaminyl-tRNA(Gln) + AMP + diphosphate. The chain is Glutamine--tRNA ligase from Pectobacterium atrosepticum (strain SCRI 1043 / ATCC BAA-672) (Erwinia carotovora subsp. atroseptica).